The primary structure comprises 259 residues: Ras-related protein Rab-34 (259 aa).

Met1 carries the N-acetylmethionine modification. Ser62, Val63, Gly64, Lys65, Thr66, Asp78, Tyr81, and Thr84 together coordinate GTP. Thr66 contributes to the Mg(2+) binding site. Residues 71–89 carry the Switch 1 motif; sequence RFCKDTFDKNYKATIGVDF. Residues Thr84 and Asp107 each contribute to the Mg(2+) site. Residues 108 to 127 carry the Switch 2 motif; that stretch reads TAGQERFKCIASTYYRGAQA. Residues Gly110, Lys167, Asp169, and Ser198 each coordinate GTP. 2 positions are modified to phosphoserine: Ser241 and Ser244. Residues Cys257 and Cys258 are each lipidated (S-geranylgeranyl cysteine).

The protein belongs to the small GTPase superfamily. Rab family. As to quaternary structure, interacts with RILP. The GTP-bound form interacts with REP15. It depends on Mg(2+) as a cofactor.

Its subcellular location is the cytoplasm. It localises to the golgi apparatus. It is found in the cytoplasmic vesicle. The protein localises to the phagosome. The protein resides in the phagosome membrane. Its subcellular location is the cell projection. It localises to the cilium. It is found in the cytoskeleton. The protein localises to the microtubule organizing center. The protein resides in the centrosome. Its subcellular location is the centriole. The catalysed reaction is GTP + H2O = GDP + phosphate + H(+). With respect to regulation, regulated by guanine nucleotide exchange factors (GEFs) which promote the exchange of bound GDP for free GTP. Regulated by GTPase activating proteins (GAPs) which increase the GTP hydrolysis activity. Inhibited by GDP dissociation inhibitors (GDIs). Its function is as follows. The small GTPases Rab are key regulators of intracellular membrane trafficking, from the formation of transport vesicles to their fusion with membranes. Rabs cycle between an inactive GDP-bound form and an active GTP-bound form that is able to recruit to membranes different sets of downstream effectors directly responsible for vesicle formation, movement, tethering and fusion. RAB34 transports protein involved in the redistribution of lysosomes to the peri-Golgi region. Plays a role in the maturation of phagosomes that engulf pathogens, such as S.aureus and M.tuberculosis. Plays a role in the fusion of phagosomes with lysosomes. Involved in ciliogenesis. In particular, it is required for early steps of the intracellular cilium assembly pathway initiated by trafficking and docking of ciliary vesicles to the centrioles in the cytoplasm, followed by axoneme formation in the cytoplasm. After axoneme elongation, the centrioles migrate close to the cell surface so that ciliary vesicles can fuse with the plasma membrane to expose cilia to the extracellular space. It seems dispensable for ciliogenesis via the extracellular pathway where cilium assembly begins after migration and docking of the centriole to the plasma membrane. Also acts as a positive regulator of hedgehog signaling and regulates ciliary function. This chain is Ras-related protein Rab-34, found in Homo sapiens (Human).